A 290-amino-acid polypeptide reads, in one-letter code: Xyloglucan endotransglycosylase/hydrolase protein 8 (290 aa).

The first 25 residues, 1–25 (MAKHLALSVAAAVAVSWLAASSAAA), serve as a signal peptide directing secretion. Residues 26–218 (AGFYEKFDVV…WSGAPFVVSY (193 aa)) enclose the GH16 domain. Residue Glu106 is the Nucleophile of the active site. Glu110 (proton donor) is an active-site residue. Glu110 is a xyloglucan binding site. N-linked (GlcNAc...) asparagine glycosylation is present at Asn114. Xyloglucan is bound by residues 123-125 (NTN), 133-135 (KKE), and 197-198 (YW). Cystine bridges form between Cys226/Cys240 and Cys273/Cys287. Position 278 (Arg278) interacts with xyloglucan.

This sequence belongs to the glycosyl hydrolase 16 family. XTH group 2 subfamily. Contains at least one intrachain disulfide bond essential for its enzymatic activity. In terms of tissue distribution, transcript strongly detected in leaf sheaths. Weakly or not expressed in leaf blades, roots and calli. Accumulation of transcript detected in shoot apex meristem, vascular tissues, young leaves, vascular bundles of leaf sheaths, and peripheral cylinder of the vascular bundles and fibers in the nodal region.

It is found in the secreted. Its subcellular location is the cell wall. The protein localises to the extracellular space. The protein resides in the apoplast. The enzyme catalyses breaks a beta-(1-&gt;4) bond in the backbone of a xyloglucan and transfers the xyloglucanyl segment on to O-4 of the non-reducing terminal glucose residue of an acceptor, which can be a xyloglucan or an oligosaccharide of xyloglucan.. In terms of biological role, catalyzes xyloglucan endohydrolysis (XEH) and/or endotransglycosylation (XET). Cleaves and religates xyloglucan polymers, an essential constituent of the primary cell wall, and thereby participates in cell wall construction of growing tissues. May promote elongation of three internodes (II, III and IV) and may be involved in cell elongation processes. In Oryza sativa subsp. japonica (Rice), this protein is Xyloglucan endotransglycosylase/hydrolase protein 8 (XTH8).